The primary structure comprises 308 residues: Pantothenate kinase (308 aa).

Residue glycine 91–serine 98 participates in ATP binding.

It belongs to the prokaryotic pantothenate kinase family.

It is found in the cytoplasm. It carries out the reaction (R)-pantothenate + ATP = (R)-4'-phosphopantothenate + ADP + H(+). Its pathway is cofactor biosynthesis; coenzyme A biosynthesis; CoA from (R)-pantothenate: step 1/5. In Lacticaseibacillus paracasei (strain ATCC 334 / BCRC 17002 / CCUG 31169 / CIP 107868 / KCTC 3260 / NRRL B-441) (Lactobacillus paracasei), this protein is Pantothenate kinase.